We begin with the raw amino-acid sequence, 101 residues long: Ascorbate-specific PTS system EIIB component (101 aa).

The PTS EIIB type-2 domain occupies 3 to 96; that stretch reads VRILAVCGNG…KLLEVIKAHF (94 aa). C9 functions as the Phosphocysteine intermediate in the catalytic mechanism. Residue C9 is modified to Phosphocysteine.

Its subcellular location is the cytoplasm. The catalysed reaction is N(pros)-phospho-L-histidyl-[protein] + L-ascorbate(out) = L-ascorbate 6-phosphate(in) + L-histidyl-[protein]. The phosphoenolpyruvate-dependent sugar phosphotransferase system (sugar PTS), a major carbohydrate active transport system, catalyzes the phosphorylation of incoming sugar substrates concomitantly with their translocation across the cell membrane. The enzyme II UlaABC PTS system is involved in ascorbate transport. This Shigella sonnei (strain Ss046) protein is Ascorbate-specific PTS system EIIB component (ulaB).